The primary structure comprises 344 residues: L-rhamnose-proton symporter (344 aa).

Transmembrane regions (helical) follow at residues 4–24 (AITM…CFYA), 38–58 (WSVG…ALLL), 68–88 (FSLS…IGNI), 101–121 (MGIG…TPII), 137–157 (TLLG…AGQL), 175–195 (LVLA…MNAA), 214–234 (LPSY…FCFI), 259–279 (VLLS…YAWG), 290–310 (ISWM…GLVL), and 323–343 (VLSL…IGMA).

This sequence belongs to the L-rhamnose transporter (TC 2.A.7.6) family.

The protein localises to the cell inner membrane. It catalyses the reaction L-rhamnopyranose(in) + H(+)(in) = L-rhamnopyranose(out) + H(+)(out). Uptake of L-rhamnose across the cytoplasmic membrane with the concomitant transport of protons into the cell (symport system). The polypeptide is L-rhamnose-proton symporter (Escherichia coli (strain ATCC 8739 / DSM 1576 / NBRC 3972 / NCIMB 8545 / WDCM 00012 / Crooks)).